We begin with the raw amino-acid sequence, 488 residues long: Cobyric acid synthase (488 aa).

One can recognise a GATase cobBQ-type domain in the interval 248–441 (VLRVVVPALP…VHGLFDAPDA (194 aa)). The active-site Nucleophile is Cys328. Residue His433 is part of the active site.

Belongs to the CobB/CobQ family. CobQ subfamily.

The protein operates within cofactor biosynthesis; adenosylcobalamin biosynthesis. In terms of biological role, catalyzes amidations at positions B, D, E, and G on adenosylcobyrinic A,C-diamide. NH(2) groups are provided by glutamine, and one molecule of ATP is hydrogenolyzed for each amidation. The polypeptide is Cobyric acid synthase (Burkholderia ambifaria (strain ATCC BAA-244 / DSM 16087 / CCUG 44356 / LMG 19182 / AMMD) (Burkholderia cepacia (strain AMMD))).